Consider the following 350-residue polypeptide: Glutamyl-tRNA reductase (350 aa).

Substrate-binding positions include 53 to 56 (TCNR), Ser-105, 110 to 112 (ETQ), and Gln-116. Cys-54 serves as the catalytic Nucleophile. NADP(+) is bound at residue 185 to 190 (GAGETA).

The protein belongs to the glutamyl-tRNA reductase family. As to quaternary structure, homodimer.

The catalysed reaction is (S)-4-amino-5-oxopentanoate + tRNA(Glu) + NADP(+) = L-glutamyl-tRNA(Glu) + NADPH + H(+). It participates in porphyrin-containing compound metabolism; protoporphyrin-IX biosynthesis; 5-aminolevulinate from L-glutamyl-tRNA(Glu): step 1/2. Functionally, catalyzes the NADPH-dependent reduction of glutamyl-tRNA(Glu) to glutamate 1-semialdehyde (GSA). The protein is Glutamyl-tRNA reductase of Deinococcus radiodurans (strain ATCC 13939 / DSM 20539 / JCM 16871 / CCUG 27074 / LMG 4051 / NBRC 15346 / NCIMB 9279 / VKM B-1422 / R1).